Here is a 437-residue protein sequence, read N- to C-terminus: Carboxypeptidase A6 (437 aa).

The signal sequence occupies residues 1 to 30; it reads MKCLGKRRGQAAAFLPLCWLFLKILQPGHS. Positions 31-129 are cleaved as a propeptide — activation peptide; the sequence is HLYNNRYAGD…SSLHTQRNRR (99 aa). N-linked (GlcNAc...) asparagine glycosylation is found at Asn-89 and Asn-153. The 295-residue stretch at 138–432 folds into the Peptidase M14 domain; it reads VYHSLEEIQN…LAVKNITMHL (295 aa). His-196 and Glu-199 together coordinate Zn(2+). Substrate contacts are provided by residues 196–199, Arg-254, and 271–272; these read HARE and NR. Cys-265 and Cys-288 are joined by a disulfide. Position 324 (His-324) interacts with Zn(2+). Substrate contacts are provided by residues 325-326 and Tyr-376; that span reads AY. Glu-398 (proton donor/acceptor) is an active-site residue. An N-linked (GlcNAc...) asparagine glycan is attached at Asn-427.

It belongs to the peptidase M14 family. The cofactor is Zn(2+). In terms of tissue distribution, expressed in the hippocampus, nucleus raphe, and cortex.

It localises to the secreted. The protein resides in the extracellular space. The protein localises to the extracellular matrix. Its function is as follows. May be involved in the proteolytic inactivation of enkephalins and neurotensin in some brain areas. May convert inactive angiotensin I into the biologically active angiotensin II. Releases a C-terminal amino acid, with preference for large hydrophobic C-terminal amino acids and shows only very weak activity toward small amino acids and histidine. This chain is Carboxypeptidase A6 (CPA6), found in Homo sapiens (Human).